The chain runs to 423 residues: Serine hydroxymethyltransferase (423 aa).

Residues Leu120 and 124-126 contribute to the (6S)-5,6,7,8-tetrahydrofolate site; that span reads GHL. Lys229 carries the post-translational modification N6-(pyridoxal phosphate)lysine. (6S)-5,6,7,8-tetrahydrofolate is bound by residues Glu245 and 353–355; that span reads SPF.

It belongs to the SHMT family. Homodimer. It depends on pyridoxal 5'-phosphate as a cofactor.

It localises to the cytoplasm. It carries out the reaction (6R)-5,10-methylene-5,6,7,8-tetrahydrofolate + glycine + H2O = (6S)-5,6,7,8-tetrahydrofolate + L-serine. It participates in one-carbon metabolism; tetrahydrofolate interconversion. Its pathway is amino-acid biosynthesis; glycine biosynthesis; glycine from L-serine: step 1/1. Functionally, catalyzes the reversible interconversion of serine and glycine with tetrahydrofolate (THF) serving as the one-carbon carrier. This reaction serves as the major source of one-carbon groups required for the biosynthesis of purines, thymidylate, methionine, and other important biomolecules. Also exhibits THF-independent aldolase activity toward beta-hydroxyamino acids, producing glycine and aldehydes, via a retro-aldol mechanism. The chain is Serine hydroxymethyltransferase from Prochlorococcus marinus (strain MIT 9312).